Here is a 94-residue protein sequence, read N- to C-terminus: Large ribosomal subunit protein eL14 (94 aa).

This sequence belongs to the eukaryotic ribosomal protein eL14 family.

This Methanopyrus kandleri (strain AV19 / DSM 6324 / JCM 9639 / NBRC 100938) protein is Large ribosomal subunit protein eL14.